The sequence spans 102 residues: Antitoxin VapB46 (102 aa).

It belongs to the phD/YefM antitoxin family.

In terms of biological role, antitoxin component of a type II toxin-antitoxin (TA) system. Neutralizes the effect of cognate toxin VapC46. This Mycobacterium tuberculosis (strain CDC 1551 / Oshkosh) protein is Antitoxin VapB46 (vapB46).